A 136-amino-acid polypeptide reads, in one-letter code: MKIALIAHDRMKEQIVQLAMAYESILAKHDLYATGTTGSRIMEATSLSLTRFLSGPLGGDQQIGAMIARNEMDLIIFLRDPLTSQPHEPDIIALLRLCDVHKIPFATNLGSAEIMLKALELGQLDWREVVREENEA.

One can recognise an MGS-like domain in the interval 1 to 136 (MKIALIAHDR…REVVREENEA (136 aa)). Substrate-binding positions include histidine 8, lysine 12, 34 to 37 (TGTT), and 54 to 55 (SG). Residue aspartate 60 is the Proton donor/acceptor of the active site. Histidine 87 serves as a coordination point for substrate.

It belongs to the methylglyoxal synthase family.

The catalysed reaction is dihydroxyacetone phosphate = methylglyoxal + phosphate. Functionally, catalyzes the formation of methylglyoxal from dihydroxyacetone phosphate. The chain is Methylglyoxal synthase from Brevibacillus brevis (strain 47 / JCM 6285 / NBRC 100599).